A 185-amino-acid polypeptide reads, in one-letter code: HTH-type transcriptional regulator Hpr (185 aa).

In terms of domain architecture, HTH marR-type spans 13–157 (AMIFSQRIAQ…LIAILRNIYG (145 aa)). The segment at residues 63–86 (ISEIAKFGVMHVSTAFNFSKKLEE) is a DNA-binding region (H-T-H motif).

In terms of assembly, homodimer.

In terms of biological role, negative regulator of protease production and sporulation. This Bacillus cytotoxicus (strain DSM 22905 / CIP 110041 / 391-98 / NVH 391-98) protein is HTH-type transcriptional regulator Hpr.